The following is a 543-amino-acid chain: CTP synthase (543 aa).

Residues 1 to 267 (MAKFVFVTGG…CREVLDVLNL (267 aa)) are amidoligase domain. Serine 13 is a CTP binding site. Serine 13 serves as a coordination point for UTP. 14 to 19 (SIGKGI) lines the ATP pocket. Tyrosine 54 is a binding site for L-glutamine. Aspartate 71 provides a ligand contact to ATP. Mg(2+)-binding residues include aspartate 71 and glutamate 141. CTP is bound by residues 148 to 150 (DIE), 188 to 193 (KTKPTQ), and lysine 224. Residues 188-193 (KTKPTQ) and lysine 224 each bind UTP. A Glutamine amidotransferase type-1 domain is found at 292–534 (KVALVGKYVQ…IEAAQQRLPN (243 aa)). Position 354 (glycine 354) interacts with L-glutamine. Cysteine 381 (nucleophile; for glutamine hydrolysis) is an active-site residue. Residues 382–385 (LGMQ), glutamate 405, and arginine 462 contribute to the L-glutamine site. Catalysis depends on residues histidine 507 and glutamate 509.

The protein belongs to the CTP synthase family. Homotetramer.

It catalyses the reaction UTP + L-glutamine + ATP + H2O = CTP + L-glutamate + ADP + phosphate + 2 H(+). The catalysed reaction is L-glutamine + H2O = L-glutamate + NH4(+). The enzyme catalyses UTP + NH4(+) + ATP = CTP + ADP + phosphate + 2 H(+). Its pathway is pyrimidine metabolism; CTP biosynthesis via de novo pathway; CTP from UDP: step 2/2. Its activity is regulated as follows. Allosterically activated by GTP, when glutamine is the substrate; GTP has no effect on the reaction when ammonia is the substrate. The allosteric effector GTP functions by stabilizing the protein conformation that binds the tetrahedral intermediate(s) formed during glutamine hydrolysis. Inhibited by the product CTP, via allosteric rather than competitive inhibition. Catalyzes the ATP-dependent amination of UTP to CTP with either L-glutamine or ammonia as the source of nitrogen. Regulates intracellular CTP levels through interactions with the four ribonucleotide triphosphates. This chain is CTP synthase, found in Synechococcus sp. (strain WH7803).